A 1150-amino-acid chain; its full sequence is ATP-dependent helicase/deoxyribonuclease subunit B (1150 aa).

8 to 15 is an ATP binding site; that stretch reads GRAGSGKS. [4Fe-4S] cluster-binding residues include Cys789, Cys1109, Cys1112, and Cys1118.

The protein belongs to the helicase family. AddB/RexB type 1 subfamily. In terms of assembly, heterodimer of AddA and AddB. Mg(2+) is required as a cofactor. It depends on [4Fe-4S] cluster as a cofactor.

The heterodimer acts as both an ATP-dependent DNA helicase and an ATP-dependent, dual-direction single-stranded exonuclease. Recognizes the chi site generating a DNA molecule suitable for the initiation of homologous recombination. The AddB subunit has 5' -&gt; 3' nuclease activity but not helicase activity. This Clostridium kluyveri (strain NBRC 12016) protein is ATP-dependent helicase/deoxyribonuclease subunit B.